An 818-amino-acid polypeptide reads, in one-letter code: Mediator of RNA polymerase II transcription subunit 16 (818 aa).

WD repeat units follow at residues 86–125 (SSKS…INLW), 296–342 (LDGR…QSVH), and 615–666 (RLPE…PVYT). The tract at residues 175–524 (TLSGFGGVAS…ANFLALKSNI (350 aa)) is interaction with Dif.

It belongs to the Mediator complex subunit 16 family. Component of the Mediator complex. Interacts with Dif.

It is found in the nucleus. In terms of biological role, component of the Mediator complex, a coactivator involved in the regulated transcription of nearly all RNA polymerase II-dependent genes. Mediator functions as a bridge to convey information from gene-specific regulatory proteins to the basal RNA polymerase II transcription machinery. Mediator is recruited to promoters by direct interactions with regulatory proteins and serves as a scaffold for the assembly of a functional preinitiation complex with RNA polymerase II and the general transcription factors. Required for activated transcription of the MtnA, MtnB and MtnD genes. Required for transcriptional activation in response to lipopolysacchardie (LPS). This is Mediator of RNA polymerase II transcription subunit 16 (MED16) from Drosophila melanogaster (Fruit fly).